A 391-amino-acid polypeptide reads, in one-letter code: Ferrochelatase (391 aa).

Fe cation-binding residues include His-196 and Glu-281.

Belongs to the ferrochelatase family.

It localises to the cytoplasm. It carries out the reaction heme b + 2 H(+) = protoporphyrin IX + Fe(2+). The protein operates within porphyrin-containing compound metabolism; protoheme biosynthesis; protoheme from protoporphyrin-IX: step 1/1. Its function is as follows. Catalyzes the ferrous insertion into protoporphyrin IX. The sequence is that of Ferrochelatase from Prochlorococcus marinus (strain MIT 9312).